Here is a 468-residue protein sequence, read N- to C-terminus: Adenosylhomocysteinase (468 aa).

Residues threonine 57, aspartate 132, and glutamate 194 each coordinate substrate. Residue 195 to 197 coordinates NAD(+); that stretch reads TTT. Substrate contacts are provided by lysine 224 and aspartate 228. NAD(+)-binding positions include asparagine 229, 258 to 263, glutamate 281, asparagine 316, 337 to 339, and asparagine 382; these read GFGDVG and IGH.

The protein belongs to the adenosylhomocysteinase family. NAD(+) serves as cofactor.

The protein localises to the cytoplasm. The enzyme catalyses S-adenosyl-L-homocysteine + H2O = L-homocysteine + adenosine. It functions in the pathway amino-acid biosynthesis; L-homocysteine biosynthesis; L-homocysteine from S-adenosyl-L-homocysteine: step 1/1. Its function is as follows. May play a key role in the regulation of the intracellular concentration of adenosylhomocysteine. In Methylorubrum extorquens (strain CM4 / NCIMB 13688) (Methylobacterium extorquens), this protein is Adenosylhomocysteinase.